Here is a 287-residue protein sequence, read N- to C-terminus: Pyridoxal 5'-phosphate synthase subunit PdxS (287 aa).

Position 21 (Asp-21) interacts with D-ribose 5-phosphate. Lys-78 acts as the Schiff-base intermediate with D-ribose 5-phosphate in catalysis. D-ribose 5-phosphate is bound at residue Gly-150. Arg-162 provides a ligand contact to D-glyceraldehyde 3-phosphate. D-ribose 5-phosphate is bound by residues Gly-211 and 232-233 (GS).

It belongs to the PdxS/SNZ family. In the presence of PdxT, forms a dodecamer of heterodimers.

It carries out the reaction aldehydo-D-ribose 5-phosphate + D-glyceraldehyde 3-phosphate + L-glutamine = pyridoxal 5'-phosphate + L-glutamate + phosphate + 3 H2O + H(+). It participates in cofactor biosynthesis; pyridoxal 5'-phosphate biosynthesis. In terms of biological role, catalyzes the formation of pyridoxal 5'-phosphate from ribose 5-phosphate (RBP), glyceraldehyde 3-phosphate (G3P) and ammonia. The ammonia is provided by the PdxT subunit. Can also use ribulose 5-phosphate and dihydroxyacetone phosphate as substrates, resulting from enzyme-catalyzed isomerization of RBP and G3P, respectively. The protein is Pyridoxal 5'-phosphate synthase subunit PdxS of Francisella philomiragia subsp. philomiragia (strain ATCC 25017 / CCUG 19701 / FSC 153 / O#319-036).